Reading from the N-terminus, the 747-residue chain is NAD-dependent protein deacetylase sirtuin-1 (747 aa).

Positions 1 to 135 (MADEAALALQ…DDEGEEEEEA (135 aa)) are disordered. N-acetylalanine is present on Ala2. The interaction with CLOCK stretch occupies residues 2-139 (ADEAALALQP…EEEEEAAAAA (138 aa)). Residues 2 to 268 (ADEAALALQP…LTGAGVSVSC (267 aa)) are interaction with H1-4. Residues Ser14 and Ser26 each carry the phosphoserine modification. Ser27 carries the post-translational modification Phosphoserine; by MAPK8. A Nuclear localization signal motif is present at residues 32–39 (PLRKRPRR). Position 47 is a phosphoserine; by MAPK8 (Ser47). Residues 61 to 100 (PAAARGCPGAAAAALWREAEAEAAAAGGEQEAQATAAAGE) show a composition bias toward low complexity. The segment covering 120–135 (LYDEDDDDEGEEEEEA) has biased composition (acidic residues). The Nuclear export signal signature appears at 138 to 145 (AAIGYRDN). The interaction with CCAR2 stretch occupies residues 143–541 (RDNLLFGDEI…LHVSEDSSSP (399 aa)). Phosphoserine occurs at positions 159, 162, 172, and 173. The Nuclear localization signal motif lies at 223–230 (IVINILSE). The Deacetylase sirtuin-type domain occupies 236-496 (KRKDINTIED…NELCHRLGGE (261 aa)). Lys238 is modified (N6-acetyllysine). The interval 256–259 (IIVL) is required for interaction with the sumoylated form of CCAR2. NAD(+) is bound by residues 261-280 (GAGV…DGIY) and 345-348 (QNID). His363 (proton acceptor) is an active-site residue. 2 residues coordinate Zn(2+): Cys371 and Cys374. Lys377 bears the N6-acetyllysine mark. Zn(2+)-binding residues include Cys395 and Cys398. S-nitrosocysteine occurs at positions 395 and 398. A Nuclear export signal motif is present at residues 425-431 (AMKYDKD). Lys430 carries the post-translational modification N6-acetyllysine. Residues 440–442 (GSS), 465–467 (NRE), and Cys482 each bind NAD(+). N6-acetyllysine is present on Lys513. Disordered regions lie at residues 523-549 (YLSE…PPDS) and 562-587 (SNDD…TSRN). Thr530 carries the phosphothreonine; by DYRK1A, DYRK3 and MAPK8 modification. At Ser535 the chain carries Phosphoserine. A compositionally biased stretch (polar residues) spans 537–549 (DSSSPERTSPPDS). Residues 538–540 (SSS) form a phosphorylated at one of three serine residues region. A Phosphothreonine modification is found at Thr544. A Phosphoserine modification is found at Ser545. The segment covering 569 to 580 (SESKGCMEEKPQ) has biased composition (basic and acidic residues). The residue at position 610 (Lys610) is an N6-acetyllysine. Phosphoserine; by CaMK2 occurs at positions 659 and 661. Residues 663–726 (DDVLSSSSCG…FGTDGDDQEA (64 aa)) are disordered. Low complexity predominate over residues 666–677 (LSSSSCGSNSDS). The segment covering 687 to 707 (EPMEDESEIEEFYNGLEDEPD) has biased composition (acidic residues). Residue Thr719 is modified to Phosphothreonine. Ser747 carries the phosphoserine modification.

The protein belongs to the sirtuin family. Class I subfamily. Interacts with XBP1 isoform 2. Found in a complex with PCAF and MYOD1. Interacts with FOXO1; the interaction deacetylates FOXO1, resulting in its nuclear retention and promotion of its transcriptional activity Component of the eNoSC complex, composed of SIRT1, SUV39H1 and RRP8. Interacts with HES1, HEY2 and PML. Interacts with RPS19BP1/AROS. Interacts with CCAR2 (via N-terminus); the interaction disrupts the interaction between SIRT1 and p53/TP53. Interacts with SETD7; the interaction induces the dissociation of SIRT1 from p53/TP53 and increases p53/TP53 activity. Interacts with MYCN, NR1I2, CREBZF, TSC2, TLE1, FOS, JUN, NR0B2, PPARG, NCOR, IRS1, IRS2 and NMNAT1. Interacts with HNF1A; the interaction occurs under nutrient restriction. Interacts with SUZ12; the interaction mediates the association with the PRC4 histone methylation complex which is specific as an association with PCR2 and PCR3 complex variants is not found. Interacts with BCL6; leads to a epigenetic repression of specific target genes. Interacts with CLOCK, BMAL1 and PER2. Interacts with PPARA; the interaction seems to be modulated by NAD(+) levels. Interacts with NR1H3 and this interaction is inhibited in the presence of CCAR2. Interacts with CHEK2. Interacts with p53/TP53. Exhibits a preferential interaction with sumoylated CCAR2 over its unmodified form. Interacts with PACS2. Interacts with SIRT7. Interacts with PUS7. Interacts with TULP3. Interacts with MORN3; the interaction enhances the ubiquitination of p53/TP53. As to quaternary structure, (Microbial infection) Interacts with HIV-1 Tat. The cofactor is Zn(2+). Methylated on multiple lysine residues; methylation is enhanced after DNA damage and is dispensable for deacetylase activity toward p53/TP53. In terms of processing, phosphorylated. Phosphorylated by STK4/MST1, resulting in inhibition of SIRT1-mediated p53/TP53 deacetylation. Phosphorylation by MAPK8/JNK1 at Ser-27, Ser-47, and Thr-530 leads to increased nuclear localization and enzymatic activity. Phosphorylation at Thr-530 by DYRK1A and DYRK3 activates deacetylase activity and promotes cell survival. Phosphorylation by mammalian target of rapamycin complex 1 (mTORC1) at Ser-47 inhibits deacetylation activity. Phosphorylated by CaMK2, leading to increased p53/TP53 and NF-kappa-B p65/RELA deacetylation activity. Phosphorylation at Ser-27 implicating MAPK9 is linked to protein stability. There is some ambiguity for some phosphosites: Ser-159/Ser-162 and Thr-544/Ser-545. Post-translationally, proteolytically cleaved by cathepsin B upon TNF-alpha treatment to yield catalytic inactive but stable SirtT1 75 kDa fragment (75SirT1). S-nitrosylated by GAPDH, leading to inhibit the NAD-dependent protein deacetylase activity. In terms of processing, acetylated at various Lys residues. Deacetylated via an autocatalytic mechanism. Autodeacetylation at Lys-238 promotes its protein deacetylase activity. Post-translationally, ubiquitinated; leading to degradation. Deubiquitinated by USP22; leading to stabilization. As to expression, widely expressed.

The protein localises to the nucleus. It localises to the PML body. It is found in the cytoplasm. Its subcellular location is the mitochondrion. The catalysed reaction is N(6)-acetyl-L-lysyl-[protein] + NAD(+) + H2O = 2''-O-acetyl-ADP-D-ribose + nicotinamide + L-lysyl-[protein]. It carries out the reaction N(6)-propanoyl-L-lysyl-[protein] + NAD(+) + H2O = 3''-O-propanoyl-ADP-D-ribose + nicotinamide + L-lysyl-[protein]. It catalyses the reaction N(6)-(2E)-butenoyl-L-lysyl-[protein] + NAD(+) + H2O = 2''-O-(2E)-but-2-enoyl-ADP-D-ribose + nicotinamide + L-lysyl-[protein]. The enzyme catalyses N(6)-[(S)-lactoyl]-L-lysyl-[protein] + NAD(+) + H2O = 2''-O-(S)-lactoyl-ADP-D-ribose + nicotinamide + L-lysyl-[protein]. Inhibited by nicotinamide. Activated by resveratrol (3,5,4'-trihydroxy-trans-stilbene), butein (3,4,2',4'-tetrahydroxychalcone), piceatannol (3,5,3',4'-tetrahydroxy-trans-stilbene), Isoliquiritigenin (4,2',4'-trihydroxychalcone), fisetin (3,7,3',4'-tetrahydroxyflavone) and quercetin (3,5,7,3',4'-pentahydroxyflavone). MAPK8/JNK1 and RPS19BP1/AROS act as positive regulators of deacetylation activity. Negatively regulated by CCAR2. NAD-dependent protein deacetylase that links transcriptional regulation directly to intracellular energetics and participates in the coordination of several separated cellular functions such as cell cycle, response to DNA damage, metabolism, apoptosis and autophagy. Can modulate chromatin function through deacetylation of histones and can promote alterations in the methylation of histones and DNA, leading to transcriptional repression. Deacetylates a broad range of transcription factors and coregulators, thereby regulating target gene expression positively and negatively. Serves as a sensor of the cytosolic ratio of NAD(+)/NADH which is altered by glucose deprivation and metabolic changes associated with caloric restriction. Is essential in skeletal muscle cell differentiation and in response to low nutrients mediates the inhibitory effect on skeletal myoblast differentiation which also involves 5'-AMP-activated protein kinase (AMPK) and nicotinamide phosphoribosyltransferase (NAMPT). Component of the eNoSC (energy-dependent nucleolar silencing) complex, a complex that mediates silencing of rDNA in response to intracellular energy status and acts by recruiting histone-modifying enzymes. The eNoSC complex is able to sense the energy status of cell: upon glucose starvation, elevation of NAD(+)/NADP(+) ratio activates SIRT1, leading to histone H3 deacetylation followed by dimethylation of H3 at 'Lys-9' (H3K9me2) by SUV39H1 and the formation of silent chromatin in the rDNA locus. Deacetylates 'Lys-266' of SUV39H1, leading to its activation. Inhibits skeletal muscle differentiation by deacetylating PCAF and MYOD1. Deacetylates H2A and 'Lys-26' of H1-4. Deacetylates 'Lys-16' of histone H4 (in vitro). Involved in NR0B2/SHP corepression function through chromatin remodeling: Recruited to LRH1 target gene promoters by NR0B2/SHP thereby stimulating histone H3 and H4 deacetylation leading to transcriptional repression. Proposed to contribute to genomic integrity via positive regulation of telomere length; however, reports on localization to pericentromeric heterochromatin are conflicting. Proposed to play a role in constitutive heterochromatin (CH) formation and/or maintenance through regulation of the available pool of nuclear SUV39H1. Upon oxidative/metabolic stress decreases SUV39H1 degradation by inhibiting SUV39H1 polyubiquitination by MDM2. This increase in SUV39H1 levels enhances SUV39H1 turnover in CH, which in turn seems to accelerate renewal of the heterochromatin which correlates with greater genomic integrity during stress response. Deacetylates 'Lys-382' of p53/TP53 and impairs its ability to induce transcription-dependent proapoptotic program and modulate cell senescence. Deacetylates TAF1B and thereby represses rDNA transcription by the RNA polymerase I. Deacetylates MYC, promotes the association of MYC with MAX and decreases MYC stability leading to compromised transformational capability. Deacetylates FOXO3 in response to oxidative stress thereby increasing its ability to induce cell cycle arrest and resistance to oxidative stress but inhibiting FOXO3-mediated induction of apoptosis transcriptional activity; also leading to FOXO3 ubiquitination and protesomal degradation. Appears to have a similar effect on MLLT7/FOXO4 in regulation of transcriptional activity and apoptosis. Deacetylates DNMT1; thereby impairs DNMT1 methyltransferase-independent transcription repressor activity, modulates DNMT1 cell cycle regulatory function and DNMT1-mediated gene silencing. Deacetylates RELA/NF-kappa-B p65 thereby inhibiting its transactivating potential and augments apoptosis in response to TNF-alpha. Deacetylates HIF1A, KAT5/TIP60, RB1 and HIC1. Deacetylates FOXO1 resulting in its nuclear retention and enhancement of its transcriptional activity leading to increased gluconeogenesis in liver. Inhibits E2F1 transcriptional activity and apoptotic function, possibly by deacetylation. Involved in HES1- and HEY2-mediated transcriptional repression. In cooperation with MYCN seems to be involved in transcriptional repression of DUSP6/MAPK3 leading to MYCN stabilization by phosphorylation at 'Ser-62'. Deacetylates MEF2D. Required for antagonist-mediated transcription suppression of AR-dependent genes which may be linked to local deacetylation of histone H3. Represses HNF1A-mediated transcription. Required for the repression of ESRRG by CREBZF. Deacetylates NR1H3 and NR1H2 and deacetylation of NR1H3 at 'Lys-434' positively regulates transcription of NR1H3:RXR target genes, promotes NR1H3 proteasomal degradation and results in cholesterol efflux; a promoter clearing mechanism after reach round of transcription is proposed. Involved in lipid metabolism: deacetylates LPIN1, thereby inhibiting diacylglycerol synthesis. Implicated in regulation of adipogenesis and fat mobilization in white adipocytes by repression of PPARG which probably involves association with NCOR1 and SMRT/NCOR2. Deacetylates p300/EP300 and PRMT1. Deacetylates ACSS2 leading to its activation, and HMGCS1 deacetylation. Involved in liver and muscle metabolism. Through deacetylation and activation of PPARGC1A is required to activate fatty acid oxidation in skeletal muscle under low-glucose conditions and is involved in glucose homeostasis. Involved in regulation of PPARA and fatty acid beta-oxidation in liver. Involved in positive regulation of insulin secretion in pancreatic beta cells in response to glucose; the function seems to imply transcriptional repression of UCP2. Proposed to deacetylate IRS2 thereby facilitating its insulin-induced tyrosine phosphorylation. Deacetylates SREBF1 isoform SREBP-1C thereby decreasing its stability and transactivation in lipogenic gene expression. Involved in DNA damage response by repressing genes which are involved in DNA repair, such as XPC and TP73, deacetylating XRCC6/Ku70, and facilitating recruitment of additional factors to sites of damaged DNA, such as SIRT1-deacetylated NBN can recruit ATM to initiate DNA repair and SIRT1-deacetylated XPA interacts with RPA2. Also involved in DNA repair of DNA double-strand breaks by homologous recombination and specifically single-strand annealing independently of XRCC6/Ku70 and NBN. Promotes DNA double-strand breaks by mediating deacetylation of SIRT6. Transcriptional suppression of XPC probably involves an E2F4:RBL2 suppressor complex and protein kinase B (AKT) signaling. Transcriptional suppression of TP73 probably involves E2F4 and PCAF. Deacetylates WRN thereby regulating its helicase and exonuclease activities and regulates WRN nuclear translocation in response to DNA damage. Deacetylates APEX1 at 'Lys-6' and 'Lys-7' and stimulates cellular AP endonuclease activity by promoting the association of APEX1 to XRCC1. Catalyzes deacetylation of ERCC4/XPF, thereby impairing interaction with ERCC1 and nucleotide excision repair (NER). Increases p53/TP53-mediated transcription-independent apoptosis by blocking nuclear translocation of cytoplasmic p53/TP53 and probably redirecting it to mitochondria. Deacetylates XRCC6/Ku70 at 'Lys-539' and 'Lys-542' causing it to sequester BAX away from mitochondria thereby inhibiting stress-induced apoptosis. Is involved in autophagy, presumably by deacetylating ATG5, ATG7 and MAP1LC3B/ATG8. Deacetylates AKT1 which leads to enhanced binding of AKT1 and PDK1 to PIP3 and promotes their activation. Proposed to play role in regulation of STK11/LBK1-dependent AMPK signaling pathways implicated in cellular senescence which seems to involve the regulation of the acetylation status of STK11/LBK1. Can deacetylate STK11/LBK1 and thereby increase its activity, cytoplasmic localization and association with STRAD; however, the relevance of such activity in normal cells is unclear. In endothelial cells is shown to inhibit STK11/LBK1 activity and to promote its degradation. Deacetylates SMAD7 at 'Lys-64' and 'Lys-70' thereby promoting its degradation. Deacetylates CIITA and augments its MHC class II transactivation and contributes to its stability. Deacetylates MECOM/EVI1. Deacetylates PML at 'Lys-487' and this deacetylation promotes PML control of PER2 nuclear localization. During the neurogenic transition, represses selective NOTCH1-target genes through histone deacetylation in a BCL6-dependent manner and leading to neuronal differentiation. Regulates the circadian expression of several core clock genes, including BMAL1, RORC, PER2 and CRY1 and plays a critical role in maintaining a controlled rhythmicity in histone acetylation, thereby contributing to circadian chromatin remodeling. Deacetylates BMAL1 and histones at the circadian gene promoters in order to facilitate repression by inhibitory components of the circadian oscillator. Deacetylates PER2, facilitating its ubiquitination and degradation by the proteasome. Protects cardiomyocytes against palmitate-induced apoptosis. Deacetylates XBP1 isoform 2; deacetylation decreases protein stability of XBP1 isoform 2 and inhibits its transcriptional activity. Deacetylates PCK1 and directs its activity toward phosphoenolpyruvate production promoting gluconeogenesis. Involved in the CCAR2-mediated regulation of PCK1 and NR1D1. Deacetylates CTNB1 at 'Lys-49'. In POMC (pro-opiomelanocortin) neurons, required for leptin-induced activation of PI3K signaling. Deacetylates SOX9; promoting SOX9 nuclear localization and transactivation activity. Involved in the regulation of centrosome duplication: deacetylates CENATAC in G1 phase, allowing for SASS6 accumulation on the centrosome and subsequent procentriole assembly. Deacetylates NDC80/HEC1. In addition to protein deacetylase activity, also acts as a protein-lysine deacylase by mediating protein delactylation, depropionylation and decrotonylation. Mediates depropionylation of Osterix (SP7). Catalyzes decrotonylation of histones; it however does not represent a major histone decrotonylase. Mediates protein delactylation of TEAD1 and YAP1. Its function is as follows. Deacetylates 'Lys-382' of p53/TP53, however with lower activity than isoform 1. In combination, the two isoforms exert an additive effect. Isoform 2 regulates p53/TP53 expression and cellular stress response and is in turn repressed by p53/TP53 presenting a SIRT1 isoform-dependent auto-regulatory loop. Functionally, catalytically inactive 75SirT1 may be involved in regulation of apoptosis. May be involved in protecting chondrocytes from apoptotic death by associating with cytochrome C and interfering with apoptosome assembly. In terms of biological role, (Microbial infection) In case of HIV-1 infection, interacts with and deacetylates the viral Tat protein. The viral Tat protein inhibits SIRT1 deacetylation activity toward RELA/NF-kappa-B p65, thereby potentiates its transcriptional activity and SIRT1 is proposed to contribute to T-cell hyperactivation during infection. This chain is NAD-dependent protein deacetylase sirtuin-1, found in Homo sapiens (Human).